The sequence spans 185 residues: Ribosome-recycling factor (185 aa).

The protein belongs to the RRF family.

Its subcellular location is the cytoplasm. Responsible for the release of ribosomes from messenger RNA at the termination of protein biosynthesis. May increase the efficiency of translation by recycling ribosomes from one round of translation to another. This is Ribosome-recycling factor from Haemophilus influenzae (strain 86-028NP).